A 167-amino-acid chain; its full sequence is Telethonin (167 aa).

Ser-39 carries the post-translational modification Phosphoserine. The interval 142 to 167 is disordered; sequence PVVPVSKPGPLRRTLSRSMSQEAQRG. Positions 157 to 167 are enriched in polar residues; it reads SRSMSQEAQRG.

Interacts with MYOZ1, MYOZ2 and MYOZ3. Interacts with CSRP3. Interacts directly with the N-terminal Ig-like domains of 2 titin (TTN) molecules. Interacts with ANKRD2; the interaction is direct.

The protein resides in the cytoplasm. It is found in the myofibril. It localises to the sarcomere. Muscle assembly regulating factor. Mediates the antiparallel assembly of titin (TTN) molecules at the sarcomeric Z-disk. The sequence is that of Telethonin (Tcap) from Mus musculus (Mouse).